We begin with the raw amino-acid sequence, 379 residues long: Cytochrome b (379 aa).

Transmembrane regions (helical) follow at residues 33 to 53 (FGSLLGACLTIQVITGLFLAM), 77 to 98 (WTIRYLHANGASMFFMCLFIHV), 113 to 133 (WNIGIMLLFSVMATAFMGYVL), and 178 to 198 (FFALHFILPFIISALAMIHLL). Positions 83 and 97 each coordinate heme b. Positions 182 and 196 each coordinate heme b. Residue His-201 coordinates a ubiquinone. Transmembrane regions (helical) follow at residues 226-246 (TKDFLGLLLLILLLMTLTLFY), 288-308 (PGGVVALILSILILAIIPFLQ), 320-340 (LSQFLFWILVADLLTLTWIGG), and 347-367 (FISIGQTASILYFSLMVFIMP).

It belongs to the cytochrome b family. The cytochrome bc1 complex contains 11 subunits: 3 respiratory subunits (MT-CYB, CYC1 and UQCRFS1), 2 core proteins (UQCRC1 and UQCRC2) and 6 low-molecular weight proteins (UQCRH/QCR6, UQCRB/QCR7, UQCRQ/QCR8, UQCR10/QCR9, UQCR11/QCR10 and a cleavage product of UQCRFS1). This cytochrome bc1 complex then forms a dimer. The cofactor is heme b.

The protein localises to the mitochondrion inner membrane. Its function is as follows. Component of the ubiquinol-cytochrome c reductase complex (complex III or cytochrome b-c1 complex) that is part of the mitochondrial respiratory chain. The b-c1 complex mediates electron transfer from ubiquinol to cytochrome c. Contributes to the generation of a proton gradient across the mitochondrial membrane that is then used for ATP synthesis. In Lepilemur ruficaudatus (Red-tailed sportive lemur), this protein is Cytochrome b (MT-CYB).